The following is a 164-amino-acid chain: Protein-export protein SecB (164 aa).

Belongs to the SecB family. As to quaternary structure, homotetramer, a dimer of dimers. One homotetramer interacts with 1 SecA dimer.

It is found in the cytoplasm. In terms of biological role, one of the proteins required for the normal export of preproteins out of the cell cytoplasm. It is a molecular chaperone that binds to a subset of precursor proteins, maintaining them in a translocation-competent state. It also specifically binds to its receptor SecA. The sequence is that of Protein-export protein SecB from Shewanella denitrificans (strain OS217 / ATCC BAA-1090 / DSM 15013).